The primary structure comprises 306 residues: Aspartate carbamoyltransferase catalytic subunit (306 aa).

Residues Arg55 and Thr56 each contribute to the carbamoyl phosphate site. Residue Lys84 coordinates L-aspartate. Positions 105, 133, and 136 each coordinate carbamoyl phosphate. Positions 166 and 227 each coordinate L-aspartate. The carbamoyl phosphate site is built by Leu265 and Pro266.

It belongs to the aspartate/ornithine carbamoyltransferase superfamily. ATCase family. In terms of assembly, heterododecamer (2C3:3R2) of six catalytic PyrB chains organized as two trimers (C3), and six regulatory PyrI chains organized as three dimers (R2).

It catalyses the reaction carbamoyl phosphate + L-aspartate = N-carbamoyl-L-aspartate + phosphate + H(+). The protein operates within pyrimidine metabolism; UMP biosynthesis via de novo pathway; (S)-dihydroorotate from bicarbonate: step 2/3. In terms of biological role, catalyzes the condensation of carbamoyl phosphate and aspartate to form carbamoyl aspartate and inorganic phosphate, the committed step in the de novo pyrimidine nucleotide biosynthesis pathway. The sequence is that of Aspartate carbamoyltransferase catalytic subunit from Aeromonas hydrophila subsp. hydrophila (strain ATCC 7966 / DSM 30187 / BCRC 13018 / CCUG 14551 / JCM 1027 / KCTC 2358 / NCIMB 9240 / NCTC 8049).